The primary structure comprises 136 residues: Large ribosomal subunit protein uL16c (136 aa).

It belongs to the universal ribosomal protein uL16 family. Part of the 50S ribosomal subunit.

It localises to the plastid. Its subcellular location is the chloroplast. The chain is Large ribosomal subunit protein uL16c from Oryza nivara (Indian wild rice).